The following is a 410-amino-acid chain: Transcription factor Dp-1 (410 aa).

K3 is modified (N6-acetyllysine). S23 carries the post-translational modification Phosphoserine. A compositionally biased stretch (polar residues) spans 73 to 100; sequence SNTLVVGSPHTPSTHFASQNQPSDSSPW. The interval 73–116 is disordered; sequence SNTLVVGSPHTPSTHFASQNQPSDSSPWSAGKRNRKGEKNGKGL. The segment covering 104-116 has biased composition (basic residues); sequence KRNRKGEKNGKGL. The tract at residues 105–127 is interaction with CEBPA; sequence RNRKGEKNGKGLRHFSMKVCEKV. Residues 113–195 mediate DNA binding; sequence GKGLRHFSMK…KKEIKWIGLP (83 aa). The DEF box motif lies at 161–195; sequence DQKNIRRRVYDALNVLMAMNIISKEKKEIKWIGLP. Residues 204–277 form a dimerization region; sequence NLEVERQRRL…KKTVIDCSIS (74 aa). Residues 211–327 form an enhances binding of RB protein to E2F region; sequence RRLERIKQKQ…DLKMARSLVP (117 aa). The tract at residues 214–246 is DCB1; the sequence is ERIKQKQSQLQELILQQIAFKNLVQRNRHAEQQ. Positions 259-315 are DCB2; that stretch reads LPFIIVNTSKKTVIDCSISNDKFEYLFNFDNTFEIHDDIEVLKRMGMACGLESGSCS. Positions 370-410 are disordered; the sequence is GMLATSSNGSQYSGSRVETPVSYVGEDDEEDDDFNENDEDD. Residues 373 to 385 show a composition bias toward polar residues; it reads ATSSNGSQYSGSR. Residues 394-410 are compositionally biased toward acidic residues; the sequence is GEDDEEDDDFNENDEDD.

This sequence belongs to the E2F/DP family. In terms of assembly, component of the E2F:DP transcription factor complex. Forms heterodimers with E2F family members. The complex can interact with hypophosphorylated retinoblastoma protein RB1 and related proteins (RBL1 and RBL2) that inhibit the E2F transactivation domain. This repression involves recruitment of histone deacetylase (HDAC). During the cell cycle, from mid-to-late G1 phase, RB family members become phosphorylated, detach from the DRTF1/E2F complex to render E2F transcriptionally active. Viral oncoproteins, notably E1A, T-antigen and HPV E7, are capable of sequestering RB protein, thus releasing the active complex. Part of the E2F6.com-1 complex in G0 phase is composed of E2F6, MGA, MAX, TFDP1, CBX3, BAT8, EUHMTASE1, RING1, RNF2, MBLR, L3MBTL2 YAF2. Component of the DREAM complex (also named LINC complex) at least composed of E2F4, E2F5, LIN9, LIN37, LIN52, LIN54, MYBL1, MYBL2, RBL1, RBL2, RBBP4, TFDP1 and TFDP2. The complex exists in quiescent cells where it represses cell cycle-dependent genes. It dissociates in S phase when LIN9, LIN37, LIN52 and LIN54 form a subcomplex that binds to MYBL2. The complex TFDP1:E2F1 interacts with CEBPA; the interaction prevents CEBPA binding to target gene promoters and represses its transcriptional activity. In terms of processing, phosphorylation by E2F1-bound cyclin A-CDK2, in the S phase, inhibits E2F-mediated DNA binding and transactivation. Ubiquitinated by the BCR(KBTBD5) complex, leading to its subsequent degradation. In terms of tissue distribution, highest levels in muscle. Also expressed in brain, placenta, liver and kidney. Lower levels in lung and pancreas. Not detected in heart.

It is found in the nucleus. Its subcellular location is the cytoplasm. Its function is as follows. Can stimulate E2F-dependent transcription. Binds DNA cooperatively with E2F family members through the E2 recognition site, 5'-TTTC[CG]CGC-3', found in the promoter region of a number of genes whose products are involved in cell cycle regulation or in DNA replication. The E2F1:DP complex appears to mediate both cell proliferation and apoptosis. Blocks adipocyte differentiation by repressing CEBPA binding to its target gene promoters. In Homo sapiens (Human), this protein is Transcription factor Dp-1 (TFDP1).